The following is a 215-amino-acid chain: MYSEKKHLIQSSINSRDIDKSRSAVPTVVEQSGRGERAFDIYSRLLRERIIFLGTGINDQVSDSLVAQLLFLEAEDPHKDIQIYINSPGGSVTAGLAIYDTMQQISPDVVTICFGVAASMGAFLLSGGAKGKRLALPNSRIMIHQPLGGAQGQAVEIEIQAKEILFLKKTLNSLLAKHTNQSLEKINEDTERDYFLSPEEAVEYGLIDKVIKNDK.

The active-site Nucleophile is Ser-119. The active site involves His-144.

The protein belongs to the peptidase S14 family. In terms of assembly, fourteen ClpP subunits assemble into 2 heptameric rings which stack back to back to give a disk-like structure with a central cavity, resembling the structure of eukaryotic proteasomes.

Its subcellular location is the cytoplasm. It catalyses the reaction Hydrolysis of proteins to small peptides in the presence of ATP and magnesium. alpha-casein is the usual test substrate. In the absence of ATP, only oligopeptides shorter than five residues are hydrolyzed (such as succinyl-Leu-Tyr-|-NHMec, and Leu-Tyr-Leu-|-Tyr-Trp, in which cleavage of the -Tyr-|-Leu- and -Tyr-|-Trp bonds also occurs).. In terms of biological role, cleaves peptides in various proteins in a process that requires ATP hydrolysis. Has a chymotrypsin-like activity. Plays a major role in the degradation of misfolded proteins. This Prochlorococcus marinus subsp. pastoris (strain CCMP1986 / NIES-2087 / MED4) protein is ATP-dependent Clp protease proteolytic subunit 3.